The primary structure comprises 343 residues: tRNA N6-adenosine threonylcarbamoyltransferase (343 aa).

Residues H120 and H124 each contribute to the Fe cation site. Substrate is bound by residues 142–146 (VVSGG), D175, G188, D192, and N281. D310 lines the Fe cation pocket.

The protein belongs to the KAE1 / TsaD family. Fe(2+) is required as a cofactor.

The protein resides in the cytoplasm. The catalysed reaction is L-threonylcarbamoyladenylate + adenosine(37) in tRNA = N(6)-L-threonylcarbamoyladenosine(37) in tRNA + AMP + H(+). In terms of biological role, required for the formation of a threonylcarbamoyl group on adenosine at position 37 (t(6)A37) in tRNAs that read codons beginning with adenine. Is involved in the transfer of the threonylcarbamoyl moiety of threonylcarbamoyl-AMP (TC-AMP) to the N6 group of A37, together with TsaE and TsaB. TsaD likely plays a direct catalytic role in this reaction. The sequence is that of tRNA N6-adenosine threonylcarbamoyltransferase from Bacillus cereus (strain ATCC 10987 / NRS 248).